Reading from the N-terminus, the 322-residue chain is Porphobilinogen deaminase (322 aa).

Cys252 is modified (S-(dipyrrolylmethanemethyl)cysteine).

Belongs to the HMBS family. As to quaternary structure, monomer. Requires dipyrromethane as cofactor.

The catalysed reaction is 4 porphobilinogen + H2O = hydroxymethylbilane + 4 NH4(+). It participates in porphyrin-containing compound metabolism; protoporphyrin-IX biosynthesis; coproporphyrinogen-III from 5-aminolevulinate: step 2/4. Functionally, tetrapolymerization of the monopyrrole PBG into the hydroxymethylbilane pre-uroporphyrinogen in several discrete steps. The chain is Porphobilinogen deaminase from Caulobacter vibrioides (strain ATCC 19089 / CIP 103742 / CB 15) (Caulobacter crescentus).